Consider the following 326-residue polypeptide: N-acetyl-gamma-glutamyl-phosphate reductase (326 aa).

Cysteine 155 is an active-site residue.

Belongs to the NAGSA dehydrogenase family. Type 1 subfamily.

The protein localises to the cytoplasm. It catalyses the reaction N-acetyl-L-glutamate 5-semialdehyde + phosphate + NADP(+) = N-acetyl-L-glutamyl 5-phosphate + NADPH + H(+). Its pathway is amino-acid biosynthesis; L-arginine biosynthesis; N(2)-acetyl-L-ornithine from L-glutamate: step 3/4. Its function is as follows. Catalyzes the NADPH-dependent reduction of N-acetyl-5-glutamyl phosphate to yield N-acetyl-L-glutamate 5-semialdehyde. The chain is N-acetyl-gamma-glutamyl-phosphate reductase from Shewanella baltica (strain OS195).